Consider the following 190-residue polypeptide: 3-isopropylmalate dehydratase small subunit (190 aa).

It belongs to the LeuD family. LeuD type 1 subfamily. As to quaternary structure, heterodimer of LeuC and LeuD.

It carries out the reaction (2R,3S)-3-isopropylmalate = (2S)-2-isopropylmalate. Its pathway is amino-acid biosynthesis; L-leucine biosynthesis; L-leucine from 3-methyl-2-oxobutanoate: step 2/4. Catalyzes the isomerization between 2-isopropylmalate and 3-isopropylmalate, via the formation of 2-isopropylmaleate. In Staphylococcus aureus (strain MRSA252), this protein is 3-isopropylmalate dehydratase small subunit.